The following is a 607-amino-acid chain: UvrABC system protein C (607 aa).

A GIY-YIG domain is found at 11–89; the sequence is CKPGVYRFED…IKEFAPPCNV (79 aa). The UVR domain maps to 201 to 236; that stretch reads SSLLESLKKKMLKASKNKEYEEAAILRDKIQAAQTV.

The protein belongs to the UvrC family. Interacts with UvrB in an incision complex.

The protein resides in the cytoplasm. The UvrABC repair system catalyzes the recognition and processing of DNA lesions. UvrC both incises the 5' and 3' sides of the lesion. The N-terminal half is responsible for the 3' incision and the C-terminal half is responsible for the 5' incision. The polypeptide is UvrABC system protein C (Tropheryma whipplei (strain Twist) (Whipple's bacillus)).